The following is a 327-amino-acid chain: tRNA uridine(34) hydroxylase (327 aa).

One can recognise a Rhodanese domain in the interval 130 to 224 (LDEDTVVLDT…YGKDPEVRGE (95 aa)). Catalysis depends on cysteine 184, which acts as the Cysteine persulfide intermediate.

It belongs to the TrhO family.

It catalyses the reaction uridine(34) in tRNA + AH2 + O2 = 5-hydroxyuridine(34) in tRNA + A + H2O. Functionally, catalyzes oxygen-dependent 5-hydroxyuridine (ho5U) modification at position 34 in tRNAs. This is tRNA uridine(34) hydroxylase from Streptococcus suis (strain 98HAH33).